The sequence spans 37 residues: Large ribosomal subunit protein bL36c (37 aa).

Belongs to the bacterial ribosomal protein bL36 family.

It localises to the plastid. The protein resides in the chloroplast. The sequence is that of Large ribosomal subunit protein bL36c from Jasminum nudiflorum (Winter jasmine).